We begin with the raw amino-acid sequence, 117 residues long: Fluoride-specific ion channel FluC 2 (117 aa).

2 consecutive transmembrane segments (helical) span residues 1–21 (MISI…RSAI) and 46–66 (FLIG…AFFV). Na(+) is bound by residues Gly-71 and Thr-74. The chain crosses the membrane as a helical span at residues 95 to 115 (LFLNYSLLQFIIGFIACYIGY).

This sequence belongs to the fluoride channel Fluc/FEX (TC 1.A.43) family.

The protein localises to the cell membrane. It catalyses the reaction fluoride(in) = fluoride(out). Its activity is regulated as follows. Na(+) is not transported, but it plays an essential structural role and its presence is essential for fluoride channel function. Fluoride-specific ion channel. Important for reducing fluoride concentration in the cell, thus reducing its toxicity. This is Fluoride-specific ion channel FluC 2 from Staphylococcus aureus (strain MSSA476).